Reading from the N-terminus, the 404-residue chain is Phosphoglycerate kinase (404 aa).

Substrate contacts are provided by residues 21–23 (DFN), R36, 59–62 (HLGR), R119, and R162. ATP is bound by residues K213, G300, E331, and 360 to 363 (GGDS).

This sequence belongs to the phosphoglycerate kinase family. Monomer.

It localises to the cytoplasm. The catalysed reaction is (2R)-3-phosphoglycerate + ATP = (2R)-3-phospho-glyceroyl phosphate + ADP. Its pathway is carbohydrate degradation; glycolysis; pyruvate from D-glyceraldehyde 3-phosphate: step 2/5. This Oenococcus oeni (strain ATCC BAA-331 / PSU-1) protein is Phosphoglycerate kinase.